The following is a 945-amino-acid chain: MRARSGARGALLLALLLCWDPTPSLAGIDSGGQALPDSFPSAPAEQLPHFLLEPEDAYIVKNKPVELHCRAFPATQIYFKCNGEWVSQKGHVTQESLDEATGLRIREVQIEVSRQQVEELFGLEDYWCQCVAWSSSGTTKSRRAYIRIAYLRKNFDQEPLAKEVPLDHEVLLQCRPPEGVPVAEVEWLKNEDVIDPAQDTNFLLTIDHNLIIRQARLSDTANYTCVAKNIVAKRRSTTATVIVYVNGGWSSWAEWSPCSNRCGRGWQKRTRTCTNPAPLNGGAFCEGQACQKTACTTVCPVDGAWTEWSKWSACSTECAHWRSRECMAPPPQNGGRDCSGTLLDSKNCTDGLCVLNQRTLNDPKSRPLEPSGDVALYAGLVVAVFVVLAVLMAVGVIVYRRNCRDFDTDITDSSAALTGGFHPVNFKTARPSNPQLLHPSAPPDLTASAGIYRGPVYALQDSADKIPMTNSPLLDPLPSLKIKVYDSSTIGSGAGLADGADLLGVLPPGTYPGDFSRDTHFLHLRSASLGSQHLLGLPRDPSSSVSGTFGCLGGRLTIPGTGVSLLVPNGAIPQGKFYDLYLRINKTESTLPLSEGSQTVLSPSVTCGPTGLLLCRPVVLTVPHCAEVIAGDWIFQLKTQAHQGHWEEVVTLDEETLNTPCYCQLEAKSCHILLDQLGTYVFTGESYSRSAVKRLQLAIFAPALCTSLEYSLRVYCLEDTPAALKEVLELERTLGGYLVEEPKTLLFKDSYHNLRLSLHDIPHAHWRSKLLAKYQEIPFYHVWNGSQKALHCTFTLERHSLASTEFTCKVCVRQVEGEGQIFQLHTTLAETPAGSLDALCSAPGNAATTQLGPYAFKIPLSIRQKICNSLDAPNSRGNDWRLLAQKLSMDRYLNYFATKASPTGVILDLWEARQQDDGDLNSLASALEEMGKSEMLVAMTTDGDC.

Residues 1 to 26 (MRARSGARGALLLALLLCWDPTPSLA) form the signal peptide. The Extracellular segment spans residues 27–377 (GIDSGGQALP…LEPSGDVALY (351 aa)). An Ig-like domain is found at 48–145 (PHFLLEPEDA…SGTTKSRRAY (98 aa)). Disulfide bonds link C69–C130, C81–C128, C174–C225, C258–C295, C262–C299, C273–C285, C314–C348, C318–C353, and C326–C338. Residues 153-242 (KNFDQEPLAK…KRRSTTATVI (90 aa)) enclose the Ig-like C2-type domain. A glycan (N-linked (GlcNAc...) asparagine) is linked at N222. TSP type-1 domains lie at 246–300 (NGGW…TVCP) and 302–354 (DGAW…GLCV). An N-linked (GlcNAc...) asparagine glycan is attached at N347. The helical transmembrane segment at 378–398 (AGLVVAVFVVLAVLMAVGVIV) threads the bilayer. The Cytoplasmic segment spans residues 399 to 945 (YRRNCRDFDT…LVAMTTDGDC (547 aa)). Residue C403 is the site of S-palmitoyl cysteine attachment. The region spanning 543–686 (SSVSGTFGCL…LGTYVFTGES (144 aa)) is the ZU5 domain. Y581 is modified (phosphotyrosine). Residues 689 to 838 (RSAVKRLQLA…AETPAGSLDA (150 aa)) are UPA domain. The interval 707-725 (SLEYSLRVYCLEDTPAALK) is interaction with DCC. The 79-residue stretch at 865 to 943 (KICNSLDAPN…EMLVAMTTDG (79 aa)) folds into the Death domain.

It belongs to the unc-5 family. In terms of assembly, interacts with the cytoplasmic part of DCC. Interacts with GNAI2 via its cytoplasmic part. Interacts (via death domain) with DAPK1 (via death domain). Interacts (via extracellular domain) with FLRT3 (via extracellular domain); the interaction is direct. Interacts (via extracellular domain) with FLRT2 and FLRT3 (via extracellular domain), but has higher affinity for FLRT3. Identified in a complex with FLRT3 and ADGRL3; does not interact with ADGRL3 by itself. In terms of processing, phosphorylated on cytoplasmic tyrosine residues. Proteolytically cleaved by caspases during apoptosis. The cleavage does not take place when the receptor is associated with netrin ligand. Its cleavage by caspases is required to induce apoptosis. Post-translationally, palmitoylation is required for pro-apoptotic activity, but not for location at lipid rafts. As to expression, mainly expressed in regions of differentiating neurons. Expressed in the developing sensory ganglia that flank the spinal cord from E12, peaking at E14. Expressed in the roof plate region of the spinal cord from E14.

The protein resides in the cell membrane. It is found in the membrane raft. Its function is as follows. Receptor for netrin required for axon guidance. Mediates axon repulsion of neuronal growth cones in the developing nervous system upon ligand binding. Axon repulsion in growth cones may be caused by its association with DCC that may trigger signaling for repulsion. Functions as a netrin receptor that negatively regulates vascular branching during angiogenesis. Mediates retraction of tip cell filopodia on endothelial growth cones in response to netrin. It also acts as a dependence receptor required for apoptosis induction when not associated with netrin ligand. Mediates apoptosis by activating DAPK1. In the absence of NTN1, activates DAPK1 by reducing its autoinhibitory phosphorylation at Ser-308 thereby increasing its catalytic activity. The chain is Netrin receptor UNC5B (Unc5b) from Rattus norvegicus (Rat).